Consider the following 66-residue polypeptide: U1-theraphotoxin-Cg1b (66 aa).

The first 21 residues, 1 to 21 (MKTSALFVIFGLVLLFCNSFA), serve as a signal peptide directing secretion. A propeptide spanning residues 22-29 (AELKTTGR) is cleaved from the precursor. 3 disulfide bridges follow: Cys31–Cys46, Cys38–Cys51, and Cys45–Cys58.

The protein belongs to the neurotoxin 10 (Hwtx-1) family. 46 (Jztx-7/10/12) subfamily. Expressed by the venom gland.

It localises to the secreted. Functionally, probable ion channel inhibitor. The protein is U1-theraphotoxin-Cg1b of Chilobrachys guangxiensis (Chinese earth tiger tarantula).